Here is a 647-residue protein sequence, read N- to C-terminus: Golgi-associated RAB2B interactor protein 3 (647 aa).

Residues 188 to 202 are compositionally biased toward polar residues; the sequence is IPTADTSTETKSTLV. 4 disordered regions span residues 188 to 220, 267 to 296, 361 to 384, and 465 to 573; these read IPTADTSTETKSTLVSEIHGEGDRDSKFQTSQD, TAGAAGATGAAGATGAAGSARAAGGAGSAR, SKSPGSGQVATGLTGTASKDQERS, and RDGS…GFVS. Residues 205 to 214 are compositionally biased toward basic and acidic residues; that stretch reads IHGEGDRDSK. Positions 361–378 are enriched in polar residues; sequence SKSPGSGQVATGLTGTAS. Ser378 bears the Phosphoserine mark. Residues 478–491 show a composition bias toward basic and acidic residues; sequence TQKEKRERRESDRK. Positions 492 to 501 are enriched in basic residues; the sequence is GSRKSSHHQR. Residues 494-511 carry the Bipartite nuclear localization signal motif; the sequence is RKSSHHQRTGASRHSSSK. Positions 528–556 are enriched in basic and acidic residues; it reads KTREDKKEKGRGSLRDQRHSSSYRSESRT. Residues Ser634 and Ser636 each carry the phosphoserine modification.

The protein belongs to the GARIN family. As to quaternary structure, interacts (via N-terminus) with RAB2B (in GTP-bound form). Interacts with FRG1.

Its subcellular location is the golgi apparatus. The protein resides in the nucleus. It is found in the cajal body. May be involved in RNA biogenesis. This Rattus norvegicus (Rat) protein is Golgi-associated RAB2B interactor protein 3 (Garin3).